The chain runs to 66 residues: U8-myrmicitoxin-Tb1a (66 aa).

An N-terminal signal peptide occupies residues 1-26 (MKLSFLSLAFAVIFVMAIMYAPQVEA). Positions 27–50 (KASADADADADAAASADALAKASA) are excised as a propeptide.

In terms of tissue distribution, expressed by the venom gland.

The protein localises to the secreted. In vivo, this neurotoxin paralyzes about 50% of blowflies (L.caesar) one hour after intrathoracic injection, when tested at high doses (54 nmol/g). The protein is U8-myrmicitoxin-Tb1a of Tetramorium bicarinatum (Tramp ant).